The sequence spans 81 residues: Exodeoxyribonuclease 7 small subunit (81 aa).

This sequence belongs to the XseB family. Heterooligomer composed of large and small subunits.

It is found in the cytoplasm. It catalyses the reaction Exonucleolytic cleavage in either 5'- to 3'- or 3'- to 5'-direction to yield nucleoside 5'-phosphates.. Bidirectionally degrades single-stranded DNA into large acid-insoluble oligonucleotides, which are then degraded further into small acid-soluble oligonucleotides. The chain is Exodeoxyribonuclease 7 small subunit from Rhodopseudomonas palustris (strain BisA53).